Here is a 241-residue protein sequence, read N- to C-terminus: MSPPVSVTKMQVENYAFAPTVNPAGSTNTLFLAGAGHRGLEIEGKFVKFTAIGVYLEESAIPFLAEKWKGKTPQELTDSVEFFRDVVTGPFEKFTRVTTILPLTGKQYSEKVAENCVAHWKGIGTYTDDEGRAIEKFLDVFRSETFPPGASIMFTQSPLGLLTISFAKDDSVTGTANAVIENKQLSEAVLESIIGKHGVSPAAKCNVAERVAELLKKSYAEEASVFGKPETEKSTIPVIGV.

Residues Thr50, Asn115, and Ser192 each contribute to the substrate site.

The protein belongs to the chalcone isomerase family.

The enzyme catalyses a chalcone = a flavanone.. It participates in secondary metabolite biosynthesis; flavonoid biosynthesis. Functionally, catalyzes the intramolecular cyclization of bicyclic chalcones into tricyclic (S)-flavanones. Responsible for the isomerization of 4,2',4',6'-tetrahydroxychalcone (also termed chalcone) into naringenin. The polypeptide is Chalcone--flavanone isomerase C (CHI3) (Petunia hybrida (Petunia)).